Reading from the N-terminus, the 90-residue chain is MFGLGRPQPTSAEKIAAVENELKVVAEMHSRMVKICTLKCIDKSYREGDLSKGESVCLDRCAAKFFETHQKISDQLQKETQARGGGGFGM.

The short motif at 36-61 (CTLKCIDKSYREGDLSKGESVCLDRC) is the Twin CX3C motif element. 2 disulfides stabilise this stretch: Cys36/Cys61 and Cys40/Cys57.

Belongs to the small Tim family. Heterohexamer; composed of 3 copies of tim9 and 3 copies of tim10, named soluble 70 kDa complex. Associates directly with the TIM22 complex, whose core is composed of tim22 and tim54. Interacts with the transmembrane regions of multi-pass transmembrane proteins in transit.

It localises to the mitochondrion inner membrane. Mitochondrial intermembrane chaperone that participates in the import and insertion of multi-pass transmembrane proteins into the mitochondrial inner membrane. Also required for the transfer of beta-barrel precursors from the TOM complex to the sorting and assembly machinery (SAM complex) of the outer membrane. Acts as a chaperone-like protein that protects the hydrophobic precursors from aggregation and guide them through the mitochondrial intermembrane space. The sequence is that of Mitochondrial import inner membrane translocase subunit tim10 (tim10) from Neurospora crassa (strain ATCC 24698 / 74-OR23-1A / CBS 708.71 / DSM 1257 / FGSC 987).